The following is a 616-amino-acid chain: Chaperone protein HtpG (616 aa).

The interval 1-334 (MAEKQIHTFQ…TADLPLNVSR (334 aa)) is a; substrate-binding. The b stretch occupies residues 335 to 549 (EILQGNKVVD…ENEMGGNMER (215 aa)). Residues 550 to 616 (IMKSLGQDVP…FVKRINKLIN (67 aa)) form a c region.

It belongs to the heat shock protein 90 family. In terms of assembly, homodimer.

The protein localises to the cytoplasm. Functionally, molecular chaperone. Has ATPase activity. This is Chaperone protein HtpG from Ruthia magnifica subsp. Calyptogena magnifica.